The following is a 629-amino-acid chain: Hemocyanin C chain (629 aa).

6 residues coordinate Cu cation: H175, H179, H206, H326, H330, and H366. N-linked (GlcNAc...) asparagine glycosylation occurs at N451. C537 and C585 are joined by a disulfide. N-linked (GlcNAc...) asparagine glycosylation occurs at N618.

The protein belongs to the tyrosinase family. Hemocyanin subfamily. Tarantula hemocyanin is a 24-chain polymer with seven different chains identified. In terms of tissue distribution, hemolymph.

The protein resides in the secreted. It is found in the extracellular space. In terms of biological role, hemocyanins are copper-containing oxygen carriers occurring freely dissolved in the hemolymph of many mollusks and arthropods. The protein is Hemocyanin C chain (HCC) of Aphonopelma sp. (American tarantula).